Here is a 401-residue protein sequence, read N- to C-terminus: Prion-like-(Q/N-rich) domain-bearing protein 8 (401 aa).

Residues 70–84 (QRSQNQNQNSNNPQQ) show a composition bias toward low complexity. Disordered regions lie at residues 70–109 (QRSQ…SNQQ) and 122–303 (YKNS…SNTQ). Composition is skewed to polar residues over residues 89-109 (TSQS…SNQQ) and 125-134 (SEVTTSTPTP). Low complexity-rich tracts occupy residues 135-181 (NGFN…QNLG), 188-239 (NNQN…NQNG), and 247-289 (FSNG…QNPN).

Expressed in the pharyngeal glands.

The polypeptide is Prion-like-(Q/N-rich) domain-bearing protein 8 (pqn-8) (Caenorhabditis elegans).